The chain runs to 595 residues: UvrABC system protein C (595 aa).

The GIY-YIG domain occupies 14–91 (DSPGCYIHKD…IQENKPKYNI (78 aa)). Residues 196-231 (DKIVNELRDKMTKASELMEFERAAEYRDLIEGIGLL) enclose the UVR domain.

This sequence belongs to the UvrC family. Interacts with UvrB in an incision complex.

The protein localises to the cytoplasm. The UvrABC repair system catalyzes the recognition and processing of DNA lesions. UvrC both incises the 5' and 3' sides of the lesion. The N-terminal half is responsible for the 3' incision and the C-terminal half is responsible for the 5' incision. The polypeptide is UvrABC system protein C (Streptococcus mutans serotype c (strain ATCC 700610 / UA159)).